The following is a 212-amino-acid chain: Thymidylate kinase (212 aa).

11–18 (GPEGAGKT) is a binding site for ATP.

It belongs to the thymidylate kinase family.

The catalysed reaction is dTMP + ATP = dTDP + ADP. Functionally, phosphorylation of dTMP to form dTDP in both de novo and salvage pathways of dTTP synthesis. In Streptococcus pneumoniae (strain ATCC 700669 / Spain 23F-1), this protein is Thymidylate kinase.